The following is a 338-amino-acid chain: F420-dependent glucose-6-phosphate dehydrogenase (338 aa).

Residue D40 participates in coenzyme F420-(gamma-Glu)n binding. Residue H41 is the Proton donor of the active site. Residues T77 and 108 to 109 (TG) each bind coenzyme F420-(gamma-Glu)n. The active-site Proton acceptor is E110. Residues N113, 178–179 (GG), and 181–182 (VV) each bind coenzyme F420-(gamma-Glu)n. Positions 196, 199, 260, and 284 each coordinate substrate.

The protein belongs to the F420-dependent glucose-6-phosphate dehydrogenase family. Homodimer.

The enzyme catalyses oxidized coenzyme F420-(gamma-L-Glu)(n) + D-glucose 6-phosphate + H(+) = 6-phospho-D-glucono-1,5-lactone + reduced coenzyme F420-(gamma-L-Glu)(n). Catalyzes the coenzyme F420-dependent oxidation of glucose 6-phosphate (G6P) to 6-phosphogluconolactone. The sequence is that of F420-dependent glucose-6-phosphate dehydrogenase from Gordonia bronchialis (strain ATCC 25592 / DSM 43247 / BCRC 13721 / JCM 3198 / KCTC 3076 / NBRC 16047 / NCTC 10667) (Rhodococcus bronchialis).